A 370-amino-acid polypeptide reads, in one-letter code: Putative glutamate--cysteine ligase 2 (370 aa).

It belongs to the glutamate--cysteine ligase type 2 family. YbdK subfamily.

It carries out the reaction L-cysteine + L-glutamate + ATP = gamma-L-glutamyl-L-cysteine + ADP + phosphate + H(+). Its function is as follows. ATP-dependent carboxylate-amine ligase which exhibits weak glutamate--cysteine ligase activity. In Janthinobacterium sp. (strain Marseille) (Minibacterium massiliensis), this protein is Putative glutamate--cysteine ligase 2.